The primary structure comprises 115 residues: UPF0235 protein CTA_0423 (115 aa).

It belongs to the UPF0235 family.

This Chlamydia trachomatis serovar A (strain ATCC VR-571B / DSM 19440 / HAR-13) protein is UPF0235 protein CTA_0423.